The following is a 917-amino-acid chain: Hexokinase HKDC1 (917 aa).

A mitochondrial-binding peptide (MBP) region spans residues 1–20 (MFAVHLMAFYFSKLKEDQIK). 2 Hexokinase domains span residues 16–458 (EDQI…MVTA) and 464–905 (QAQR…LITA). ATP is bound by residues R30 and 84-89 (DLGGSK). The tract at residues 73 to 207 (DGSENGEFLS…DMDVDILALV (135 aa)) is hexokinase small subdomain 1. 84-91 (DLGGSKFR) is a binding site for D-glucose 6-phosphate. Residues S155, 172–173 (TK), and 208–209 (ND) each bind D-glucose. The interval 208–447 (NDTVGTMMTC…CDVRFLLSES (240 aa)) is hexokinase large subdomain 1. Positions 209 and 232 each coordinate D-glucose 6-phosphate. D-glucose is bound by residues N235, E260, and 291-294 (QLFE). A D-glucose 6-phosphate-binding site is contributed by 413–415 (DGT). 425–426 (KR) lines the ATP pocket. Residues S449 and 532–536 (DLGGT) each bind D-glucose 6-phosphate. The interval 521–654 (DGTEKGKFLA…EFDLDIVAVV (134 aa)) is hexokinase small subdomain 2. ATP is bound at residue 532 to 537 (DLGGTN). D-glucose contacts are provided by residues 602–603 (SF), 619–620 (TK), and 655–656 (ND). A hexokinase large subdomain 2 region spans residues 655–894 (NDTVGTMMTC…CDVTFMLSED (240 aa)). 2 residues coordinate D-glucose 6-phosphate: D656 and T679. T679 provides a ligand contact to ATP. Residues 681 to 682 (SN), E707, and E741 each bind D-glucose. Residues 746-747 (GM), 783-787 (TKFLS), and 862-866 (TLYKL) contribute to the ATP site. Residues 860–862 (DGT) and S896 contribute to the D-glucose 6-phosphate site.

Belongs to the hexokinase family. As to expression, widely expressed. Highly expressed in the brush border, surface epithelium and the myenteric plexus of the small and large intestines; the acinar centrocytes and interlobular ducts of the pancreas; and the alveolar macrophages in the lungs (at protein level). Present at moderate level in the thyroid follicular epithelium (at protein level).

The protein resides in the cytoplasm. Its subcellular location is the mitochondrion membrane. It localises to the photoreceptor inner segment. The catalysed reaction is a D-hexose + ATP = a D-hexose 6-phosphate + ADP + H(+). It carries out the reaction D-glucose + ATP = D-glucose 6-phosphate + ADP + H(+). It participates in carbohydrate metabolism; hexose metabolism. The protein operates within carbohydrate degradation; glycolysis; D-glyceraldehyde 3-phosphate and glycerone phosphate from D-glucose: step 1/4. Catalyzes the phosphorylation of hexose to hexose 6-phosphate, although at very low level compared to other hexokinases. Has low glucose phosphorylating activity compared to other hexokinases. Involved in glucose homeostasis and hepatic lipid accumulation. Required to maintain whole-body glucose homeostasis during pregnancy; however additional evidences are required to confirm this role. This Homo sapiens (Human) protein is Hexokinase HKDC1.